The primary structure comprises 625 residues: MCGLVGYVGQRPACGVVMDALRRMEYRGYDSSGIALINGSAKSGNLTVRRRAGRLSNLESVLAEMVPASLAGNVGLGHIRWATHGRPTDRNAHPHRDATGKIAVVHNGIIENFPSLRHELEIAGVEFVSDTDTEVAVHLVAQAYCAGETAGDFVGSVLAVLRRLQGHFTLVFANADEPGTIVAARRSTPLVLGIGDGEMFVGSDVAAFIEHTRQAVELGQDQAVVITADGYRISDFDGNDDAVNARTFHIDWDLAAAEKGGYEYFMLKEIAEQPDAVVDTLLGHFTGGRIVLDEQRLSDQELREIDKVFVVACGTAYHSGLLAKYTIEHWTRLPVEVELASEFRYRDPVLDRSTLVVAISQSGETADTLEAVRHAKEQKAKVLAICNTNGSQIPRECDAVLYTRAGPEIGVASTKTFLAQVAANYLLGLALAQARGTKYPDEVQREYRELEAMPDLVARVIAGMGPVADLAYRFAQSTTVLFLGRHVGYPVALEGALKLKELAYMHAEGFAAGELKHGPIALIEENLPVIVVMPSPKGSAMLHAKLLSNIREIQTRGAVTIVIAEEGDDTVRLYADHLIELPAVSTLLQPLLSTIPLQVFAASVAQARGYDVDKPRNLAKSVTVE.

The active-site Nucleophile; for GATase activity is Cys2. The 228-residue stretch at 2 to 229 (CGLVGYVGQR…QDQAVVITAD (228 aa)) folds into the Glutamine amidotransferase type-2 domain. SIS domains follow at residues 298–437 (SDQE…ARGT) and 470–615 (LAYR…VDKP). The For Fru-6P isomerization activity role is filled by Lys620.

As to quaternary structure, homodimer.

Its subcellular location is the cytoplasm. It catalyses the reaction D-fructose 6-phosphate + L-glutamine = D-glucosamine 6-phosphate + L-glutamate. In terms of biological role, catalyzes the first step in hexosamine metabolism, converting fructose-6P into glucosamine-6P using glutamine as a nitrogen source. The polypeptide is Glutamine--fructose-6-phosphate aminotransferase [isomerizing] (Mycobacterium leprae (strain TN)).